Consider the following 375-residue polypeptide: Chaperone protein DnaJ (375 aa).

The region spanning 5 to 70 (DFYETLGVAK…QKRAAYDRYG (66 aa)) is the J domain. Residues 136-214 (GKTAQIRVPT…CHGQGRVTEE (79 aa)) form a CR-type zinc finger. Zn(2+) contacts are provided by C149, C152, C166, C169, C188, C191, C202, and C205. CXXCXGXG motif repeat units lie at residues 149 to 156 (CDVCSGSG), 166 to 173 (CGTCQGTG), 188 to 195 (CPTCHGRG), and 202 to 209 (CPKCHGQG).

This sequence belongs to the DnaJ family. In terms of assembly, homodimer. Requires Zn(2+) as cofactor.

Its subcellular location is the cytoplasm. In terms of biological role, participates actively in the response to hyperosmotic and heat shock by preventing the aggregation of stress-denatured proteins and by disaggregating proteins, also in an autonomous, DnaK-independent fashion. Unfolded proteins bind initially to DnaJ; upon interaction with the DnaJ-bound protein, DnaK hydrolyzes its bound ATP, resulting in the formation of a stable complex. GrpE releases ADP from DnaK; ATP binding to DnaK triggers the release of the substrate protein, thus completing the reaction cycle. Several rounds of ATP-dependent interactions between DnaJ, DnaK and GrpE are required for fully efficient folding. Also involved, together with DnaK and GrpE, in the DNA replication of plasmids through activation of initiation proteins. The chain is Chaperone protein DnaJ from Rhizobium etli (strain ATCC 51251 / DSM 11541 / JCM 21823 / NBRC 15573 / CFN 42).